Reading from the N-terminus, the 118-residue chain is Small ribosomal subunit protein uS13 (118 aa).

Residues 94-118 (GLPVRGQRTKTNARTRKGPRKPIKK) form a disordered region.

Belongs to the universal ribosomal protein uS13 family. In terms of assembly, part of the 30S ribosomal subunit. Forms a loose heterodimer with protein S19. Forms two bridges to the 50S subunit in the 70S ribosome.

Its function is as follows. Located at the top of the head of the 30S subunit, it contacts several helices of the 16S rRNA. In the 70S ribosome it contacts the 23S rRNA (bridge B1a) and protein L5 of the 50S subunit (bridge B1b), connecting the 2 subunits; these bridges are implicated in subunit movement. Contacts the tRNAs in the A and P-sites. This chain is Small ribosomal subunit protein uS13, found in Histophilus somni (strain 129Pt) (Haemophilus somnus).